Reading from the N-terminus, the 483-residue chain is Protein nucleotidyltransferase YdiU (483 aa).

ATP is bound by residues G81, G83, R84, K103, D115, G116, R166, and R173. Catalysis depends on D244, which acts as the Proton acceptor. Mg(2+)-binding residues include N245 and D254. Residue D254 participates in ATP binding.

This sequence belongs to the SELO family. The cofactor is Mg(2+). It depends on Mn(2+) as a cofactor.

The enzyme catalyses L-seryl-[protein] + ATP = 3-O-(5'-adenylyl)-L-seryl-[protein] + diphosphate. The catalysed reaction is L-threonyl-[protein] + ATP = 3-O-(5'-adenylyl)-L-threonyl-[protein] + diphosphate. It carries out the reaction L-tyrosyl-[protein] + ATP = O-(5'-adenylyl)-L-tyrosyl-[protein] + diphosphate. It catalyses the reaction L-histidyl-[protein] + UTP = N(tele)-(5'-uridylyl)-L-histidyl-[protein] + diphosphate. The enzyme catalyses L-seryl-[protein] + UTP = O-(5'-uridylyl)-L-seryl-[protein] + diphosphate. The catalysed reaction is L-tyrosyl-[protein] + UTP = O-(5'-uridylyl)-L-tyrosyl-[protein] + diphosphate. Its function is as follows. Nucleotidyltransferase involved in the post-translational modification of proteins. It can catalyze the addition of adenosine monophosphate (AMP) or uridine monophosphate (UMP) to a protein, resulting in modifications known as AMPylation and UMPylation. The polypeptide is Protein nucleotidyltransferase YdiU (Shewanella pealeana (strain ATCC 700345 / ANG-SQ1)).